The sequence spans 316 residues: Small ribosomal subunit biogenesis GTPase RsgA (316 aa).

Positions 83-248 (DQYKSKLFAA…LIDSPGFQEF (166 aa)) constitute a CP-type G domain. GTP contacts are provided by residues 131–134 (NKTD) and 185–193 (GQSGMGKST). Residues Cys272, Cys277, His279, and Cys285 each coordinate Zn(2+).

It belongs to the TRAFAC class YlqF/YawG GTPase family. RsgA subfamily. In terms of assembly, monomer. Associates with 30S ribosomal subunit, binds 16S rRNA. Requires Zn(2+) as cofactor.

It is found in the cytoplasm. In terms of biological role, one of several proteins that assist in the late maturation steps of the functional core of the 30S ribosomal subunit. Helps release RbfA from mature subunits. May play a role in the assembly of ribosomal proteins into the subunit. Circularly permuted GTPase that catalyzes slow GTP hydrolysis, GTPase activity is stimulated by the 30S ribosomal subunit. This is Small ribosomal subunit biogenesis GTPase RsgA from Paraburkholderia xenovorans (strain LB400).